A 1564-amino-acid chain; its full sequence is Nucleoporin nup184 (1564 aa).

It is found in the nucleus. The protein resides in the nuclear pore complex. Its function is as follows. Interacts with pom152 in the core structure of the nuclear pore complex (NPC). Involved in the export of mRNA. This Schizosaccharomyces pombe (strain 972 / ATCC 24843) (Fission yeast) protein is Nucleoporin nup184 (nup184).